Here is a 330-residue protein sequence, read N- to C-terminus: tRNA-modifying protein YgfZ (330 aa).

2 residues coordinate folate: Trp-28 and Trp-192.

It belongs to the tRNA-modifying YgfZ family.

Its subcellular location is the cytoplasm. Folate-binding protein involved in regulating the level of ATP-DnaA and in the modification of some tRNAs. It is probably a key factor in regulatory networks that act via tRNA modification, such as initiation of chromosomal replication. This is tRNA-modifying protein YgfZ from Blochmanniella pennsylvanica (strain BPEN).